A 603-amino-acid chain; its full sequence is Elongation factor 4 (603 aa).

A tr-type G domain is found at 7 to 189 (KKIRNFCIIA…SVVKNVPPPE (183 aa)). Residues 19–24 (DHGKST) and 136–139 (NKID) each bind GTP.

Belongs to the TRAFAC class translation factor GTPase superfamily. Classic translation factor GTPase family. LepA subfamily.

Its subcellular location is the cell membrane. It catalyses the reaction GTP + H2O = GDP + phosphate + H(+). Functionally, required for accurate and efficient protein synthesis under certain stress conditions. May act as a fidelity factor of the translation reaction, by catalyzing a one-codon backward translocation of tRNAs on improperly translocated ribosomes. Back-translocation proceeds from a post-translocation (POST) complex to a pre-translocation (PRE) complex, thus giving elongation factor G a second chance to translocate the tRNAs correctly. Binds to ribosomes in a GTP-dependent manner. This Acetivibrio thermocellus (strain ATCC 27405 / DSM 1237 / JCM 9322 / NBRC 103400 / NCIMB 10682 / NRRL B-4536 / VPI 7372) (Clostridium thermocellum) protein is Elongation factor 4.